A 66-amino-acid chain; its full sequence is Alpha-conotoxin GIB (66 aa).

The signal sequence occupies residues 1–21 (MGMRMMFTVFLLVVLATTVVS). Positions 22 to 49 (FPSERASDGRDDTAKDEGSDMEKLVEKK) are excised as a propeptide. 2 disulfides stabilise this stretch: Cys51–Cys56 and Cys52–Cys62. The residue at position 64 (Gly64) is a Glycine amide.

This sequence belongs to the conotoxin A superfamily. Expressed by the venom duct.

It is found in the secreted. Its function is as follows. Alpha-conotoxins act on postsynaptic membranes, they bind to the nicotinic acetylcholine receptors (nAChR) and thus inhibit them. Both the globular (with C1-C3; C2-C4 disulfide pattern) and ribbon (C1-C4; C2-C3) isomers reversibly inhibit human muscle-type alpha-1-beta-1-delta-epsilon/CHRNA1-CHRNB1-CHRND-CHRNE nAChRs (IC(50)=116 nM and IC(50)=643 nM, respectively). Both isomers also inhibit alpha-7/CHRNA7 and alpha-9-alpha-10/CHRNA9-CHRNA10 (IC(50)=1113 nM by globular isomer) nAChRs. The polypeptide is Alpha-conotoxin GIB (Conus geographus (Geography cone)).